The chain runs to 447 residues: Tubulin beta chain (447 aa).

GTP is bound by residues Gln11, Glu69, Ser138, Gly142, Thr143, Gly144, Asn204, and Asn226. Position 69 (Glu69) interacts with Mg(2+). Residues 424 to 447 (QYQEASVSEGEEEYDEEAPLEGEE) form a disordered region. Residues 432 to 447 (EGEEEYDEEAPLEGEE) are compositionally biased toward acidic residues.

Belongs to the tubulin family. Dimer of alpha and beta chains. A typical microtubule is a hollow water-filled tube with an outer diameter of 25 nm and an inner diameter of 15 nM. Alpha-beta heterodimers associate head-to-tail to form protofilaments running lengthwise along the microtubule wall with the beta-tubulin subunit facing the microtubule plus end conferring a structural polarity. Microtubules usually have 13 protofilaments but different protofilament numbers can be found in some organisms and specialized cells. Mg(2+) serves as cofactor.

It localises to the cytoplasm. The protein resides in the cytoskeleton. In terms of biological role, tubulin is the major constituent of microtubules, a cylinder consisting of laterally associated linear protofilaments composed of alpha- and beta-tubulin heterodimers. Microtubules grow by the addition of GTP-tubulin dimers to the microtubule end, where a stabilizing cap forms. Below the cap, tubulin dimers are in GDP-bound state, owing to GTPase activity of alpha-tubulin. The protein is Tubulin beta chain of Venturia inaequalis (Apple scab fungus).